The primary structure comprises 571 residues: Urease subunit alpha (571 aa).

A Urease domain is found at 133 to 571 (GGIDTHVHFI…LPLTQRYFLF (439 aa)). Positions 138, 140, and 221 each coordinate Ni(2+). The residue at position 221 (lysine 221) is an N6-carboxylysine. Substrate is bound at residue histidine 223. Ni(2+)-binding residues include histidine 250 and histidine 276. Histidine 324 serves as the catalytic Proton donor. Aspartate 364 is a binding site for Ni(2+).

This sequence belongs to the metallo-dependent hydrolases superfamily. Urease alpha subunit family. In terms of assembly, heterotrimer of UreA (gamma), UreB (beta) and UreC (alpha) subunits. Three heterotrimers associate to form the active enzyme. Ni cation is required as a cofactor. Post-translationally, carboxylation allows a single lysine to coordinate two nickel ions.

The protein resides in the cytoplasm. The enzyme catalyses urea + 2 H2O + H(+) = hydrogencarbonate + 2 NH4(+). It participates in nitrogen metabolism; urea degradation; CO(2) and NH(3) from urea (urease route): step 1/1. The polypeptide is Urease subunit alpha (Staphylococcus aureus (strain USA300)).